Reading from the N-terminus, the 543-residue chain is Ribosomal protein arginine N-methyltransferase rmt3 (543 aa).

A C2H2-type zinc finger spans residues Phe58–His81. Residues Asp217–Asn543 enclose the SAM-dependent MTase PRMT-type domain. Residues Arg239, Gly263, Asp285, Ser287, Ile313, and Glu314 each coordinate S-adenosyl-L-homocysteine. Residues Glu329 and Glu338 contribute to the active site.

Belongs to the class I-like SAM-binding methyltransferase superfamily. Protein arginine N-methyltransferase family. In terms of assembly, interacts with ef1a-c, rps2 and rps24. Note=Associates with the 40S ribosomal particle.

It localises to the cytoplasm. It is found in the cytosol. It carries out the reaction L-arginyl-[protein] + S-adenosyl-L-methionine = N(omega)-methyl-L-arginyl-[protein] + S-adenosyl-L-homocysteine + H(+). The enzyme catalyses L-arginyl-[protein] + 2 S-adenosyl-L-methionine = N(omega),N(omega)-dimethyl-L-arginyl-[protein] + 2 S-adenosyl-L-homocysteine + 2 H(+). In terms of biological role, methylates (mono and asymmetric dimethylation) the guanidino nitrogens of arginyl residues in ribosomal protein rps2. The protein is Ribosomal protein arginine N-methyltransferase rmt3 (rmt3) of Schizosaccharomyces pombe (strain 972 / ATCC 24843) (Fission yeast).